The chain runs to 138 residues: Phospholipase A2 crotoxin basic chain CBa2 (138 aa).

An N-terminal signal peptide occupies residues 1–16 (MRALWIVAVLLVGVEG). 7 disulfide bridges follow: Cys-42–Cys-131, Cys-44–Cys-60, Cys-59–Cys-111, Cys-65–Cys-138, Cys-66–Cys-104, Cys-73–Cys-97, and Cys-91–Cys-102. Ca(2+) contacts are provided by Tyr-43, Gly-45, and Gly-47. The active site involves His-63. Asp-64 contacts Ca(2+). The active site involves Asp-105.

It belongs to the phospholipase A2 family. Group II subfamily. D49 sub-subfamily. As to quaternary structure, heterodimer of one of the acidic (CA1, CA2, CA3 or CA4) and one of the basic (CBa1, CBa2, CBb, CBc or CBd) subunits; non-covalently linked. The acidic subunit is non-toxic, without enzymatic activity and comprises 3 peptides that are cross-linked by 5 disulfide bridges. The basic subunit is toxic, has phospholipase A2 activity and is composed of a single chain. Multiple variants of each subunit give different crotoxin complexes that can be subdivided into 2 classes: (1) those of high toxicity, low PLA2 activity (CBb, CBc and CBd linked with high affinity to any CA) and high stability (K(d)=4.5 nM) and (2) those of moderate toxicity, high PLA2 activity (CBa2 linked with low affinity to any CA) and low stability (K(d)=25 nM). Interacts with human NBD1 domain of CFTR. The cofactor is Ca(2+). As to expression, expressed by the venom gland.

It localises to the secreted. It catalyses the reaction a 1,2-diacyl-sn-glycero-3-phosphocholine + H2O = a 1-acyl-sn-glycero-3-phosphocholine + a fatty acid + H(+). Its function is as follows. Heterodimer CA-CB: Crotoxin is a potent presynaptic neurotoxin that possesses phospholipase A2 (PLA2) activity and exerts a lethal action by blocking neuromuscular transmission. It consists of a non-covalent association of a basic and weakly toxic PLA2 subunit (CBa2, CBb, CBc, or CBd), with a small acidic, non-enzymatic and non-toxic subunit (CA1, CA2, CA3 or CA4). The complex acts by binding to a specific 48-kDa protein (R48) receptor located on presynaptic membranes, forming a transient ternary complex CA-CB-R48, followed by dissociation of the CA-CB complex and release of the CA subunit. At equilibrium, only the CB subunits remain associated with the specific crotoxin receptor. In addition to neurotoxicity, crotoxin has been found to exert myotoxicity, nephrotoxicity, and cardiovascular toxicity. Moreover, anti-inflammatory, immunomodulatory, anti-tumor and analgesic effects of crotoxin have also been reported. Functionally, monomer CBa2: The basic subunit of crotoxin is a snake venom phospholipase A2 (PLA2) that exhibits weak neurotoxicity (10-fold less than the heterodimer) and strong anticoagulant effects by binding to factor Xa (F10) and inhibiting the prothrombinase activity (IC(50) is 41 nM). In addition, it shows the same effects described for the heterodimer and binds the nucleotide-binding domain (NBD1) of CFTR chloride channels and increases the channel current. PLA2 catalyzes the calcium-dependent hydrolysis of the 2-acyl groups in 3-sn-phosphoglycerides. This chain is Phospholipase A2 crotoxin basic chain CBa2, found in Crotalus durissus terrificus (South American rattlesnake).